Consider the following 200-residue polypeptide: Pyridoxine/pyridoxamine 5'-phosphate oxidase (200 aa).

FMN is bound by residues 48–53 (RMVLLK), 63–64 (YT), Lys70, and Gln92. A substrate-binding site is contributed by Lys53. Substrate is bound by residues Tyr110, Arg114, and Ser118. FMN is bound by residues 127–128 (QS) and Trp171. 177–179 (RLH) lines the substrate pocket. Position 181 (Arg181) interacts with FMN.

It belongs to the pyridoxamine 5'-phosphate oxidase family. Homodimer. The cofactor is FMN.

It carries out the reaction pyridoxamine 5'-phosphate + O2 + H2O = pyridoxal 5'-phosphate + H2O2 + NH4(+). The enzyme catalyses pyridoxine 5'-phosphate + O2 = pyridoxal 5'-phosphate + H2O2. It functions in the pathway cofactor metabolism; pyridoxal 5'-phosphate salvage; pyridoxal 5'-phosphate from pyridoxamine 5'-phosphate: step 1/1. The protein operates within cofactor metabolism; pyridoxal 5'-phosphate salvage; pyridoxal 5'-phosphate from pyridoxine 5'-phosphate: step 1/1. In terms of biological role, catalyzes the oxidation of either pyridoxine 5'-phosphate (PNP) or pyridoxamine 5'-phosphate (PMP) into pyridoxal 5'-phosphate (PLP). This Cereibacter sphaeroides (strain ATCC 17023 / DSM 158 / JCM 6121 / CCUG 31486 / LMG 2827 / NBRC 12203 / NCIMB 8253 / ATH 2.4.1.) (Rhodobacter sphaeroides) protein is Pyridoxine/pyridoxamine 5'-phosphate oxidase.